A 90-amino-acid polypeptide reads, in one-letter code: Cell division topological specificity factor (90 aa).

This sequence belongs to the MinE family.

In terms of biological role, prevents the cell division inhibition by proteins MinC and MinD at internal division sites while permitting inhibition at polar sites. This ensures cell division at the proper site by restricting the formation of a division septum at the midpoint of the long axis of the cell. This Clostridium perfringens (strain ATCC 13124 / DSM 756 / JCM 1290 / NCIMB 6125 / NCTC 8237 / Type A) protein is Cell division topological specificity factor.